Here is a 203-residue protein sequence, read N- to C-terminus: Outer-membrane lipoprotein carrier protein (203 aa).

An N-terminal signal peptide occupies residues 1-20 (MRRGRVWLAALCLAAGAAHA).

This sequence belongs to the LolA family. As to quaternary structure, monomer.

The protein resides in the periplasm. Its function is as follows. Participates in the translocation of lipoproteins from the inner membrane to the outer membrane. Only forms a complex with a lipoprotein if the residue after the N-terminal Cys is not an aspartate (The Asp acts as a targeting signal to indicate that the lipoprotein should stay in the inner membrane). This Methylibium petroleiphilum (strain ATCC BAA-1232 / LMG 22953 / PM1) protein is Outer-membrane lipoprotein carrier protein.